A 180-amino-acid chain; its full sequence is Hypoxanthine-guanine phosphoribosyltransferase (180 aa).

2 residues coordinate diphosphate: K43 and G44. Mg(2+) is bound by residues E99 and D100. Catalysis depends on D103, which acts as the Proton acceptor. GMP is bound by residues K131, 152–153 (FV), and D159. R165 provides a ligand contact to diphosphate.

Belongs to the purine/pyrimidine phosphoribosyltransferase family. The cofactor is Mg(2+).

Its subcellular location is the cytoplasm. The enzyme catalyses IMP + diphosphate = hypoxanthine + 5-phospho-alpha-D-ribose 1-diphosphate. The catalysed reaction is GMP + diphosphate = guanine + 5-phospho-alpha-D-ribose 1-diphosphate. It participates in purine metabolism; IMP biosynthesis via salvage pathway; IMP from hypoxanthine: step 1/1. It functions in the pathway purine metabolism; GMP biosynthesis via salvage pathway; GMP from guanine: step 1/1. Purine salvage pathway enzyme that catalyzes the transfer of the ribosyl-5-phosphate group from 5-phospho-alpha-D-ribose 1-diphosphate (PRPP) to the N9 position of the 6-oxopurines hypoxanthine and guanine to form the corresponding ribonucleotides IMP (inosine 5'-monophosphate) and GMP (guanosine 5'-monophosphate), with the release of PPi. The polypeptide is Hypoxanthine-guanine phosphoribosyltransferase (hpt) (Streptococcus pneumoniae serotype 4 (strain ATCC BAA-334 / TIGR4)).